A 304-amino-acid polypeptide reads, in one-letter code: Non-specific ribonucleoside hydrolase RihC (304 aa).

The active site involves H233.

It belongs to the IUNH family. RihC subfamily.

Hydrolyzes both purine and pyrimidine ribonucleosides with a broad-substrate specificity. This Shigella boydii serotype 4 (strain Sb227) protein is Non-specific ribonucleoside hydrolase RihC.